Here is a 272-residue protein sequence, read N- to C-terminus: Thiazole synthase (272 aa).

Lys111 serves as the catalytic Schiff-base intermediate with DXP. 1-deoxy-D-xylulose 5-phosphate is bound by residues Gly172, 198–199, and 220–221; these read AG and NS. The disordered stretch occupies residues 249 to 272; it reads SGRLPRRDQASASSPTTGLVQSPQ. The segment covering 258–272 has biased composition (polar residues); it reads ASASSPTTGLVQSPQ.

This sequence belongs to the ThiG family. Homotetramer. Forms heterodimers with either ThiH or ThiS.

It localises to the cytoplasm. The enzyme catalyses [ThiS sulfur-carrier protein]-C-terminal-Gly-aminoethanethioate + 2-iminoacetate + 1-deoxy-D-xylulose 5-phosphate = [ThiS sulfur-carrier protein]-C-terminal Gly-Gly + 2-[(2R,5Z)-2-carboxy-4-methylthiazol-5(2H)-ylidene]ethyl phosphate + 2 H2O + H(+). Its pathway is cofactor biosynthesis; thiamine diphosphate biosynthesis. Catalyzes the rearrangement of 1-deoxy-D-xylulose 5-phosphate (DXP) to produce the thiazole phosphate moiety of thiamine. Sulfur is provided by the thiocarboxylate moiety of the carrier protein ThiS. In vitro, sulfur can be provided by H(2)S. This Synechococcus sp. (strain CC9605) protein is Thiazole synthase.